We begin with the raw amino-acid sequence, 388 residues long: MKHLHRFFSSDASGGIILIIAAVLAMLMANSGFTSGWYHAFLETPVQLRVGALEINKNMLLWINDALMAVFFLLIGLEVKRELMQGSLASLRQAAFPVIAAIGGMIVPALLYLAFNYSDPITREGWAIPAATDIAFALGVLALLGSRVPLALKIFLMALAIIDDLGAIVIIALFYTSDLSMVSLGVAAFAIVLLAVLNLCDVRRTGVYILVGVVLWTAVLKSGVHATLAGVIVGFFIPLKEKHGRSPAKRLEHVLHPWVAYLILPLFAFANAGVSLQGVTLDGLTSILPLGIIAGLLIGKPLGISLFCWLALRLKLAKLPEGTRFQQIMAVGILCGIGFTMSIFIASLAFGSVDPALINWAKLGILIGSLLSAVIGYSWLRTRLSPVV.

11 helical membrane-spanning segments follow: residues G14–T34, M59–V79, A95–F115, G125–G145, I154–F174, L179–L199, V219–L239, V254–V274, I287–F307, I328–L348, and A356–G376.

This sequence belongs to the NhaA Na(+)/H(+) (TC 2.A.33) antiporter family.

The protein resides in the cell inner membrane. It carries out the reaction Na(+)(in) + 2 H(+)(out) = Na(+)(out) + 2 H(+)(in). Functionally, na(+)/H(+) antiporter that extrudes sodium in exchange for external protons. The protein is Na(+)/H(+) antiporter NhaA of Citrobacter koseri (strain ATCC BAA-895 / CDC 4225-83 / SGSC4696).